A 229-amino-acid chain; its full sequence is Acidic leucine-rich nuclear phosphoprotein 32-related protein 1 (229 aa).

LRR repeat units follow at residues 19–40, 42–63, 64–85, and 90–110; these read TVDT…TDQL, NLEM…PTLP, ALTY…DVLV, and DLKK…RCLK. One can recognise an LRRCT domain in the interval 124-164; it reads PSLGLLEDYREKMFEMIPSLKILDGCDVDGEEVEEEFAGEG. Over residues 155–177 the composition is skewed to acidic residues; the sequence is EVEEEFAGEGGEDSEEGSGDEDG. Residues 155 to 229 are disordered; it reads EVEEEFAGEG…DNKKAAGDDE (75 aa). Residues 219–229 show a composition bias toward basic and acidic residues; it reads PDNKKAAGDDE.

The protein belongs to the ANP32 family.

The protein is Acidic leucine-rich nuclear phosphoprotein 32-related protein 1 of Caenorhabditis elegans.